Consider the following 546-residue polypeptide: Probable ganciclovir kinase (546 aa).

Residues 1 to 11 (MEQLKTPQNQK) show a composition bias toward polar residues. Residues 1 to 29 (MEQLKTPQNQKTRPRNMLPKKKGKELKKR) form a disordered region. Residues 12 to 29 (TRPRNMLPKKKGKELKKR) show a composition bias toward basic residues. Residues 185-193 (LGSGSYGMV) and K202 contribute to the ATP site. The active-site Proton acceptor is D297.

The protein belongs to the protein kinase superfamily. Tyr protein kinase family. HCMV ganciclovir subfamily.

Functionally, phosphorylates the antiviral nucleoside analog ganciclovir. This chain is Probable ganciclovir kinase (U69), found in Human herpesvirus 7 (strain JI) (HHV-7).